A 335-amino-acid polypeptide reads, in one-letter code: Glycerol-3-phosphate dehydrogenase [NAD(P)+] (335 aa).

Positions 12, 13, and 107 each coordinate NADPH. Sn-glycerol 3-phosphate contacts are provided by K107, G138, and S140. A142 provides a ligand contact to NADPH. The sn-glycerol 3-phosphate site is built by K193, D246, S256, R257, and N258. The Proton acceptor role is filled by K193. R257 is an NADPH binding site. The NADPH site is built by V281 and E283.

The protein belongs to the NAD-dependent glycerol-3-phosphate dehydrogenase family.

The protein localises to the cytoplasm. The catalysed reaction is sn-glycerol 3-phosphate + NAD(+) = dihydroxyacetone phosphate + NADH + H(+). It carries out the reaction sn-glycerol 3-phosphate + NADP(+) = dihydroxyacetone phosphate + NADPH + H(+). It participates in membrane lipid metabolism; glycerophospholipid metabolism. Catalyzes the reduction of the glycolytic intermediate dihydroxyacetone phosphate (DHAP) to sn-glycerol 3-phosphate (G3P), the key precursor for phospholipid synthesis. The polypeptide is Glycerol-3-phosphate dehydrogenase [NAD(P)+] (Geobacter sp. (strain M21)).